We begin with the raw amino-acid sequence, 442 residues long: Kelch domain-containing protein 10 (442 aa).

The interval 1–57 (MSAAQGWDRNRRRGGGAAGAGGGGSGAGGGSGGSGGRGTGQLNRFVQLSGRPHLPGK) is disordered. Arg-13 carries the omega-N-methylarginine modification. Residues 15 to 39 (GGAAGAGGGGSGAGGGSGGSGGRGT) show a composition bias toward gly residues. Kelch repeat units follow at residues 87 to 154 (RPPP…PREL), 155 to 198 (ASMS…ALLS), 199 to 260 (CRGK…PEER), 261 to 319 (YRHE…RRCH), 320 to 364 (SCVQ…PEPV), and 365 to 403 (YFHC…LVVP). The interaction with CUL2 stretch occupies residues 401–442 (VVPSLLELAWEKLLAAFPNLANLSRTQLLHLGLTQGLIERLK).

The protein belongs to the KLHDC10 family. Component of a CRL2 E3 ubiquitin-protein ligase complex, also named ECS (Elongin BC-CUL2/5-SOCS-box protein) complex, composed of CUL2, Elongin BC (ELOB and ELOC), RBX1 and substrate-specific adapter KLHDC10. Interacts (via the 6 Kelch repeats) with PPP5C.

The protein resides in the nucleus. Its subcellular location is the cytoplasm. It functions in the pathway protein modification; protein ubiquitination. In terms of biological role, substrate-recognition component of a Cul2-RING (CRL2) E3 ubiquitin-protein ligase complex of the DesCEND (destruction via C-end degrons) pathway, which recognizes a C-degron located at the extreme C-terminus of target proteins, leading to their ubiquitination and degradation. The C-degron recognized by the DesCEND pathway is usually a motif of less than ten residues and can be present in full-length proteins, truncated proteins or proteolytically cleaved forms. The CRL2(KLHDC10) complex specifically recognizes proteins with a proline-glycine (Pro-Gly) or an alanine tail (CAT tail) at the C-terminus, leading to their ubiquitination and degradation. The CRL2(KLHDC10) complex is involved in the ribosome-associated quality control (RQC) pathway, which mediates the extraction of incompletely synthesized nascent chains from stalled ribosomes: CRL2(KLHDC10) acts downstream of NEMF and recognizes CAT tails associated with stalled nascent chains, leading to their ubiquitination and degradation. Participates in the oxidative stress-induced cell death through MAP3K5 activation. Inhibits PPP5C phosphatase activity on MAP3K5. Acts as a regulator of necroptosis. This is Kelch domain-containing protein 10 from Homo sapiens (Human).